The chain runs to 68 residues: DNA-directed RNA polymerase subunit omega (68 aa).

This sequence belongs to the RNA polymerase subunit omega family. The RNAP catalytic core consists of 2 alpha, 1 beta, 1 beta' and 1 omega subunit. When a sigma factor is associated with the core the holoenzyme is formed, which can initiate transcription.

It carries out the reaction RNA(n) + a ribonucleoside 5'-triphosphate = RNA(n+1) + diphosphate. Its function is as follows. Promotes RNA polymerase assembly. Latches the N- and C-terminal regions of the beta' subunit thereby facilitating its interaction with the beta and alpha subunits. The polypeptide is DNA-directed RNA polymerase subunit omega (Neisseria gonorrhoeae (strain NCCP11945)).